We begin with the raw amino-acid sequence, 330 residues long: DNA-directed RNA polymerase subunit alpha (330 aa).

Residues 1 to 237 are alpha N-terminal domain (alpha-NTD); the sequence is MYTEINEMLT…RQLHAFVDMK (237 aa). The alpha C-terminal domain (alpha-CTD) stretch occupies residues 251 to 330; the sequence is FDPVLLRSVD…ENWPPASLGE (80 aa).

Belongs to the RNA polymerase alpha chain family. As to quaternary structure, homodimer. The RNAP catalytic core consists of 2 alpha, 1 beta, 1 beta' and 1 omega subunit. When a sigma factor is associated with the core the holoenzyme is formed, which can initiate transcription.

It catalyses the reaction RNA(n) + a ribonucleoside 5'-triphosphate = RNA(n+1) + diphosphate. DNA-dependent RNA polymerase catalyzes the transcription of DNA into RNA using the four ribonucleoside triphosphates as substrates. The chain is DNA-directed RNA polymerase subunit alpha from Legionella pneumophila (strain Paris).